The sequence spans 628 residues: Beta-lactamase-like protein 1 (628 aa).

The N-terminal stretch at 1–28 (MKNILSFSFSFSFLYILFLLLFLNNNLL) is a signal peptide. 4 N-linked (GlcNAc...) asparagine glycosylation sites follow: Asn-45, Asn-68, Asn-198, and Asn-241. Low complexity predominate over residues 245–281 (NNNNNNNNNNNNNNNNNNNNNNNNNNNNNNNNNNNNN). Positions 245 to 285 (NNNNNNNNNNNNNNNNNNNNNNNNNNNNNNNNNNNNNKIKT) are disordered. N-linked (GlcNAc...) asparagine glycans are attached at residues Asn-313 and Asn-335. The segment at 494–516 (EKEEKEEEEENQQDESQQQQQQQ) is disordered. Residues 496-506 (EEKEEEEENQQ) show a composition bias toward acidic residues. A compositionally biased stretch (low complexity) spans 507–516 (DESQQQQQQQ).

The protein belongs to the beta-lactamase family.

It is found in the secreted. The sequence is that of Beta-lactamase-like protein 1 from Dictyostelium discoideum (Social amoeba).